Consider the following 568-residue polypeptide: MMSVWFIQLAIFAQSRIIEVFPEQGKDIENIALALKKAADCKGRPVTVKFSPGIYQLDRAKSSQVLYYISNTTSELDDPDPTKHIGLYLNTLKNITIDGCGSTLLMNGEMTSFVLDKCEGIVLKNFNIDYKHPTQTEVEVLEEGNDYLIVQVHPTSQYRIVDAQLEWYGDGWSFKNGIAQSYDRISEMTWRSWSPMENLLRTVELRPNVLYLQYKEKPQVGLHTIFQMRDSFRDEVSGFVNRSKGILLENINFYYLGNFGVVCQYSENITVDRCNFAPRPGSGRTNAGFADFIQVSGCRGMIDIKNSRFIGAHDDPINIHGTHLRVIEFLSDNRLKLRFMHDQTFGFEAFFKGDDIELVDSRSLLVVGKCKVKEAKLVTPREMELTLSSPLSSEVMQQKDLVIENVTWTPEVRITNNYFARVPTRGILITTRRKSLIEGNTFYGMQMSGIFVADDGLSWYESGPVHDLTIRQNTFLNCGEPIISIDPENREYKGAVHKNITIEENYFYMRKNSSCAIRAKAVDGLMIRHNLIYSLDTEKNKESDFIQMYNCNEVTIKENRVQLHHLFK.

The first 17 residues, 1 to 17 (MMSVWFIQLAIFAQSRI), serve as a signal peptide directing secretion. PbH1 repeat units lie at residues 87 to 125 (LYLNTLKNITIDGCGSTLLMNGEMTSFVLDKCEGIVLKN), 243 to 265 (SKGILLENINFYYLGNFGVVCQY), 299 to 321 (RGMIDIKNSRFIGAHDDPINIHG), 409 to 431 (TPEVRITNNYFARVPTRGILITT), 432 to 454 (RRKSLIEGNTFYGMQMSGIFVAD), and 465 to 486 (VHDLTIRQNTFLNCGEPIISID).

It belongs to the glycosyl hydrolase 110 family. A subfamily.

The catalysed reaction is Hydrolysis of terminal, non-reducing branched (1-&gt;3)-alpha-D-galactosidic residues, producing free D-galactose.. The enzyme catalyses Hydrolysis of terminal, non-reducing alpha-D-galactose residues in alpha-D-galactosides, including galactose oligosaccharides, galactomannans and galactolipids.. Its function is as follows. Alpha-galactosidase that specifically removes branched alpha-1,3-linked galactose residues present in blood group B antigens. Has no activity toward linear alpha-1,3-linked galactose residues. The polypeptide is Alpha-1,3-galactosidase A (glaA) (Bacteroides thetaiotaomicron (strain ATCC 29148 / DSM 2079 / JCM 5827 / CCUG 10774 / NCTC 10582 / VPI-5482 / E50)).